A 40-amino-acid chain; its full sequence is SGSKIGNGCFGLPLDRISNTSGMGCRNPIQNRPKSTPGGS.

A disulfide bridge connects residues C9 and C25. The segment covering 17-34 (ISNTSGMGCRNPIQNRPK) has biased composition (polar residues). The interval 17-40 (ISNTSGMGCRNPIQNRPKSTPGGS) is disordered.

This sequence belongs to the natriuretic peptide family. In terms of tissue distribution, expressed by the venom gland.

The protein localises to the secreted. Snake venom natriuretic peptide that targets NPR1 and possibly NPR2. Exhibits hypotensive and vasodepressor activities. Recombinant PtNP-a demonstrates a dose-dependent stimulation of cGMP production via the natriuretic peptide receptor 1 (NPR1) (EC(50)=563 nM) in Madine Darby Canine Kidney (MDCK) cells. It also inhibits the angiotensin converting enzyme (ACE). In Pseudonaja textilis (Eastern brown snake), this protein is Natriuretic peptide PtNP-a.